The sequence spans 463 residues: Putative glycine--tRNA ligase, cytoplasmic (463 aa).

Residues 25–54 (TLEDSHAAKPETNAAIELPNKSKPEKSAVE) form a disordered region. A compositionally biased stretch (basic and acidic residues) spans 44 to 54 (NKSKPEKSAVE). Substrate contacts are provided by R153 and E239. ATP-binding positions include 271 to 273 (RNE) and 281 to 286 (LRTREF). Substrate-binding positions include 286-290 (FTLAE) and N376. 398–399 (EC) is a binding site for ATP.

Belongs to the class-II aminoacyl-tRNA synthetase family. In terms of assembly, homodimer.

Its subcellular location is the cytoplasm. The catalysed reaction is tRNA(Gly) + glycine + ATP = glycyl-tRNA(Gly) + AMP + diphosphate. Its function is as follows. Catalyzes the attachment of glycine to tRNA(Gly). Is also able produce diadenosine tetraphosphate (Ap4A), a universal pleiotropic signaling molecule needed for cell regulation pathways, by direct condensation of 2 ATPs. This is Putative glycine--tRNA ligase, cytoplasmic from Arabidopsis thaliana (Mouse-ear cress).